Reading from the N-terminus, the 462-residue chain is Coagulation factor IX (462 aa).

The N-terminal stretch at Met-1 to Cys-21 is a signal peptide. Residues Ala-22–Arg-39 constitute a propeptide that is removed on maturation. Residues Tyr-40, Asn-41, Glu-46, Glu-47, Glu-54, Glu-56, Glu-59, Glu-60, Glu-65, Glu-66, and Glu-69 each coordinate Ca(2+). One can recognise a Gla domain in the interval Tyr-40 to Asp-86. A 4-carboxyglutamate mark is found at Glu-46, Glu-47, Glu-54, Glu-56, Glu-59, Glu-60, Glu-65, Glu-66, Glu-69, Glu-72, and Glu-75. A Mg(2+)-binding site is contributed by Glu-54. Cys-57 and Cys-62 are joined by a disulfide. Position 59 (Glu-59) interacts with Mg(2+). Position 65 (Glu-65) interacts with Mg(2+). Glu-69 is a Mg(2+) binding site. Residue Glu-75 participates in Ca(2+) binding. Residue Glu-75 coordinates Mg(2+). The O-linked (GalNAc...) threonine glycan is linked to Thr-78. Glu-79, Asp-86, Gly-87, and Gln-89 together coordinate Ca(2+). At Glu-79 the chain carries 4-carboxyglutamate. Position 79 (Glu-79) interacts with Mg(2+). The region spanning Asp-86–Glu-122 is the EGF-like; calcium-binding domain. Intrachain disulfides connect Cys-90-Cys-101, Cys-95-Cys-110, Cys-112-Cys-121, Cys-127-Cys-138, Cys-134-Cys-148, Cys-150-Cys-163, Cys-171-Cys-336, Cys-253-Cys-269, Cys-383-Cys-397, and Cys-408-Cys-436. O-linked (Glc...) serine glycosylation is present at Ser-92. The Ca(2+) site is built by Asp-103 and Asp-104. Asp-103 bears the (3R)-3-hydroxyaspartate mark. Phosphoserine is present on Ser-107. A propeptide spans Ala-186–Arg-227 (activation peptide). Sulfotyrosine is present on Tyr-195. The residue at position 198 (Ser-198) is a Phosphoserine. Phosphothreonine; alternate is present on Thr-199. Thr-199 is a glycosylation site (O-linked (GalNAc...) threonine; alternate). N-linked (GlcNAc...) asparagine glycosylation is found at Asn-208 and Asn-214. O-linked (GalNAc...) threonine glycosylation is found at Thr-216 and Thr-226. The Peptidase S1 domain occupies Val-228–Lys-460. His-268 (charge relay system) is an active-site residue. The Ca(2+) site is built by Glu-282, Asn-284, Glu-287, Glu-289, and Glu-292. The N-linked (GlcNAc...) asparagine glycan is linked to Asn-307. Catalysis depends on Asp-316, which acts as the Charge relay system. The Charge relay system role is filled by Ser-412.

This sequence belongs to the peptidase S1 family. In terms of assembly, heterodimer of a light chain and a heavy chain; disulfide-linked. Interacts (inactive and activated) with F11 (activated) in calcium-dependent manner. Interacts with SERPINC1. Interacts (inactive and activated) with nitrophorin-2, an anticoagulant protein from Rhodnius prolixus. In terms of processing, activated by factor XIa, which excises the activation peptide. The propeptide can also be removed by snake venom protease. Activated by coagulation factor VIIa-tissue factor (F7-F3) complex in calcium-dependent manner. The iron and 2-oxoglutarate dependent 3-hydroxylation of aspartate and asparagine is (R) stereospecific within EGF domains. Post-translationally, predominantly O-glucosylated at Ser-92 by POGLUT1 in vitro.

It localises to the secreted. The catalysed reaction is Selective cleavage of Arg-|-Ile bond in factor X to form factor Xa.. Its function is as follows. Factor IX is a vitamin K-dependent plasma protein that participates in the intrinsic pathway of blood coagulation by converting factor X to its active form in the presence of Ca(2+) ions, phospholipids, and factor VIIIa. The sequence is that of Coagulation factor IX (F9) from Rattus norvegicus (Rat).